A 450-amino-acid chain; its full sequence is Chromosomal replication initiator protein DnaA 2 (450 aa).

Positions Met-1–Lys-87 are domain I, interacts with DnaA modulators. The domain II stretch occupies residues Lys-87–Leu-114. The segment at Lys-115–Cys-330 is domain III, AAA+ region. 4 residues coordinate ATP: Gly-159, Gly-161, Lys-162, and Thr-163. A domain IV, binds dsDNA region spans residues Arg-331 to Gly-450.

This sequence belongs to the DnaA family. In terms of assembly, oligomerizes as a right-handed, spiral filament on DNA at oriC.

The protein resides in the cytoplasm. In terms of biological role, plays an essential role in the initiation and regulation of chromosomal replication. ATP-DnaA binds to the origin of replication (oriC) to initiate formation of the DNA replication initiation complex once per cell cycle. Binds the DnaA box (a 9 base pair repeat at the origin) and separates the double-stranded (ds)DNA. Forms a right-handed helical filament on oriC DNA; dsDNA binds to the exterior of the filament while single-stranded (ss)DNA is stabiized in the filament's interior. The ATP-DnaA-oriC complex binds and stabilizes one strand of the AT-rich DNA unwinding element (DUE), permitting loading of DNA polymerase. After initiation quickly degrades to an ADP-DnaA complex that is not apt for DNA replication. Binds acidic phospholipids. In Chlamydia pneumoniae (Chlamydophila pneumoniae), this protein is Chromosomal replication initiator protein DnaA 2.